The primary structure comprises 919 residues: MSHHVPNLYGTPIRDPHERKRNSASMGEVNQSVSSRNCERGSEKGTKQRKKASHACDQCRRKRIKCRFDKHTGVCQGCLEVGEKCQFIRVPLKRGPAKKRGSVVSIEKFSSDNDPLQYRPRTHSYPMNSGNNYLPSLARNSSFPSISSLFVPSITAQSQQFVKVPYDDIKRRSSLAILGSDSSISTEFGGNYRLDENLNVRQEGKDIVAKGMITPVEEMGACSSNVRRQGSQSLPIQEQRASPYINPFISGRSRLSSLSYTSEATTSEGNTQGKNQCMLTPNSVRSIEKERLNSLTAGFPNKKLGTDGRSDKWDKNSTWKPVYRSSNPSHPSTEKNVSLNQEASAKPLMLGTYRQFDATSFYKVLGIYYNFFHINFPVIPINKSKFTDMLDPEKPNVIDEIRQINNEIIQCFKTALEVLVFCKIKQRRSSKSTKSWSRDSLCDFQKGLYYIQNFNKCIADCFQSLITIKPVLKQNSSVIPSRIKFIYFSTIIVLNFILILAGEESSLLLGPSVGVFNEFQAHKLFLPFQNTSPMLLLNSNEESGDEILDYAVLFKRLYILLNILDTLQSFRLGQPKLINLNFGSAIETYFSDKTGHNQVVEKAPVALDNILRNLKLGEFITYFVLNRKSLQVNVPHHLLFTNQTDYGEFAVEKGEHDNIAGKFETLLKKKEILIRKLLNIEQKNDHILENCCNSDAEMKNIGELVCSMITLVSGILDSITNMNAENSVDLDSKPLPNAYFAQDSEEELMSPTQSITSNLASEENTRCTTKDLMGTVSIFMLPMVEECYNIISLIGPIPTTLISLYIRNGNMAKGINDRIMTLSTALNELVQITALFNTLEPFRKNAHDRAKRYYVSATSSTGCYESVMKSMYSGKCAASNASNVAPSEEENKKILKKFADIGWKLMDDSELGCCCCFFN.

Residues 1–54 (MSHHVPNLYGTPIRDPHERKRNSASMGEVNQSVSSRNCERGSEKGTKQRKKASH) are disordered. A compositionally biased stretch (polar residues) spans 23–36 (SASMGEVNQSVSSR). Positions 37-46 (NCERGSEKGT) are enriched in basic and acidic residues. The zn(2)-C6 fungal-type DNA-binding region spans 56–85 (CDQCRRKRIKCRFDKHTGVCQGCLEVGEKC). A disordered region spans residues 297–338 (AGFPNKKLGTDGRSDKWDKNSTWKPVYRSSNPSHPSTEKNVS). Residues 304 to 317 (LGTDGRSDKWDKNS) are compositionally biased toward basic and acidic residues. Over residues 318 to 338 (TWKPVYRSSNPSHPSTEKNVS) the composition is skewed to polar residues.

This sequence belongs to the EDS1/RGT1 family. As to quaternary structure, binds DNA in a sequence-specific manner.

The protein localises to the nucleus. This chain is Transcriptional regulatory protein EDS1 (EDS1), found in Saccharomyces cerevisiae (strain ATCC 204508 / S288c) (Baker's yeast).